Consider the following 553-residue polypeptide: General alpha-glucoside permease (553 aa).

Over residues 1–21 the composition is skewed to polar residues; the sequence is MSVDENQLENGQLLSSENEAS. The tract at residues 1–26 is disordered; that stretch reads MSVDENQLENGQLLSSENEASSPFKE. Residues 1–33 lie on the Cytoplasmic side of the membrane; that stretch reads MSVDENQLENGQLLSSENEASSPFKESIPSRSS. Residues 34-54 form a helical membrane-spanning segment; sequence LYLIALTVSLLGVQLTWSVEL. The Extracellular segment spans residues 55–72; it reads GYGTPYLFSLGLRKEWTS. A helical transmembrane segment spans residues 73 to 93; that stretch reads IIWIAGPLTGILIQPIAGILS. Residues 94-111 lie on the Cytoplasmic side of the membrane; it reads DRVNSRIGRRRPFMLCAS. A helical membrane pass occupies residues 112–132; sequence LLGTFSLFLMGWAPDICLFIF. The Extracellular portion of the chain corresponds to 133–140; that stretch reads SNEVLMKR. Residues 141–161 traverse the membrane as a helical segment; sequence VTIVLATISIYLLDVAVNVVM. At 162–186 the chain is on the cytoplasmic side; that stretch reads ASTRSLIVDSVRSDQQHEANSWAGR. The chain crosses the membrane as a helical span at residues 187–207; sequence MIGVGNVLGYLLGYLPLYRIF. The Extracellular segment spans residues 208 to 216; sequence SFLNFTQLQ. Residues 217-237 traverse the membrane as a helical segment; sequence VFCVLASISLVLTVTITTIFV. The Cytoplasmic portion of the chain corresponds to 238-280; sequence SERRFPPVEHEKSVAGEIFEFFTTMRQSITALPFTLKRICFVQ. Residues 281-301 form a helical membrane-spanning segment; that stretch reads FFAYFGWFPFLFYITTYVGIL. At 302-322 the chain is on the extracellular side; the sequence is YLRHAPKGHEEDWDMATRQGS. The chain crosses the membrane as a helical span at residues 323–343; that stretch reads FALLLFAIISLAANTALPLLL. Over 344-424 the chain is Cytoplasmic; the sequence is EDTEDDEEDE…SKVQIKGLTL (81 aa). The interval 368–399 is disordered; the sequence is NDLGNIRTGTNTPRLGNLSETTSFRSENEPSR. Residues 374-392 show a composition bias toward polar residues; that stretch reads RTGTNTPRLGNLSETTSFR. The chain crosses the membrane as a helical span at residues 425–445; the sequence is PILWLSSHVLFGVCMLSTIFL. At 446–452 the chain is on the extracellular side; the sequence is QTSWQAQ. The helical transmembrane segment at 453 to 473 threads the bilayer; that stretch reads AMVAICGLSWACTLWIPYSLF. The Cytoplasmic portion of the chain corresponds to 474–494; the sequence is SSEIGKLGLRESSGKMIGVHN. Residues 495 to 515 traverse the membrane as a helical segment; the sequence is VFISAPQVLSTIIATIVFIQS. The Extracellular segment spans residues 516-521; it reads EGSHRD. A helical transmembrane segment spans residues 522-542; the sequence is IADNSIAWVLRIGGISAFLAA. The Cytoplasmic segment spans residues 543–553; that stretch reads YQCRHLLPINF.

It belongs to the glycoside-pentoside-hexuronide (GPH) cation symporter transporter (TC 2.A.2.4) family.

The protein localises to the membrane. Functionally, responsible for the transport of maltose and sucrose into the cell, with the concomitant uptake of protons (symport system). This Schizosaccharomyces pombe (strain 972 / ATCC 24843) (Fission yeast) protein is General alpha-glucoside permease (sut1).